Reading from the N-terminus, the 150-residue chain is Globin-2 (150 aa).

The Globin domain maps to 11-150; it reads PLSDAEKNKI…MICILLSSAY (140 aa). The heme b site is built by H74 and H106.

The protein belongs to the globin family. Monomer.

The protein is Globin-2 of Mordacia mordax (Southern hemisphere lamprey).